The following is a 367-amino-acid chain: Cobalt-precorrin-5B C(1)-methyltransferase (367 aa).

The protein belongs to the CbiD family.

It catalyses the reaction Co-precorrin-5B + S-adenosyl-L-methionine = Co-precorrin-6A + S-adenosyl-L-homocysteine. Its pathway is cofactor biosynthesis; adenosylcobalamin biosynthesis; cob(II)yrinate a,c-diamide from sirohydrochlorin (anaerobic route): step 6/10. Functionally, catalyzes the methylation of C-1 in cobalt-precorrin-5B to form cobalt-precorrin-6A. The protein is Cobalt-precorrin-5B C(1)-methyltransferase of Leptospira interrogans serogroup Icterohaemorrhagiae serovar Lai (strain 56601).